The following is a 614-amino-acid chain: ATP-dependent rRNA helicase SPB4 (614 aa).

The short motif at Trp10–Ala38 is the Q motif element. In terms of domain architecture, Helicase ATP-binding spans Ile41–Ile233. Ala54–Thr61 contributes to the ATP binding site. A DEAD box motif is present at residues Asp181–Asp184. One can recognise a Helicase C-terminal domain in the interval Lys260–Met431. Residues Glu510–Ser581 are a coiled coil. Positions Lys514 to Ala529 are enriched in basic and acidic residues. A disordered region spans residues Lys514 to Leu614. Positions Arg530–Leu541 are enriched in basic residues. 2 stretches are compositionally biased toward basic and acidic residues: residues Lys551 to Glu563 and Glu584 to Lys595. Positions Ser604–Leu614 are enriched in polar residues.

Belongs to the DEAD box helicase family. DDX55/SPB4 subfamily. As to quaternary structure, component of pre-60S ribosomal complexes.

It is found in the nucleus. The protein resides in the nucleolus. It catalyses the reaction ATP + H2O = ADP + phosphate + H(+). Functionally, ATP-binding RNA helicase involved in the biogenesis of 60S ribosomal subunits. Binds 90S pre-ribosomal particles and dissociates from pre-60S ribosomal particles after processing of 27SB pre-rRNA. Required for the normal formation of 18S rRNA through the processing of pre-rRNAs at sites A0, A1 and A2, and the normal formation of 25S and 5.8S rRNAs through the processing of pre-rRNAs at sites C1 and C2. This chain is ATP-dependent rRNA helicase SPB4, found in Debaryomyces hansenii (strain ATCC 36239 / CBS 767 / BCRC 21394 / JCM 1990 / NBRC 0083 / IGC 2968) (Yeast).